A 421-amino-acid chain; its full sequence is Exoskeleton protein RP43 (421 aa).

Residues Met-1–Cys-24 form the signal peptide. 6 disulfide bridges follow: Cys-72/Cys-104, Cys-132/Cys-154, Cys-193/Cys-219, Cys-247/Cys-269, Cys-309/Cys-335, and Cys-362/Cys-384. CUB domains are found at residues Cys-72–Val-191, Cys-193–Pro-306, and Cys-309–Gly-421.

Detected in vestimentum and trunk but not in opisthosome or obturaculum. In the vestimentum, expression is restricted to epithelial cells under apical cuticular plaques.

May play a role in protein-protein interactions during tube assembly. This chain is Exoskeleton protein RP43, found in Riftia pachyptila (Vent tube worm).